Reading from the N-terminus, the 317-residue chain is Ribosomal RNA small subunit methyltransferase H (317 aa).

Residues 36 to 38, D56, F80, D102, and Q109 each bind S-adenosyl-L-methionine; that span reads GGH.

It belongs to the methyltransferase superfamily. RsmH family.

The protein localises to the cytoplasm. The enzyme catalyses cytidine(1402) in 16S rRNA + S-adenosyl-L-methionine = N(4)-methylcytidine(1402) in 16S rRNA + S-adenosyl-L-homocysteine + H(+). Its function is as follows. Specifically methylates the N4 position of cytidine in position 1402 (C1402) of 16S rRNA. In Baumannia cicadellinicola subsp. Homalodisca coagulata, this protein is Ribosomal RNA small subunit methyltransferase H.